The primary structure comprises 249 residues: Protein-lysine 6-oxidase (249 aa).

At Tyr19 the chain carries Sulfotyrosine. The interval 45-249 (PDLVPDPYYI…YASGCTISPY (205 aa)) is lysyl-oxidase like. Intrachain disulfides connect Cys70-Cys76, Cys123-Cys172, Cys156-Cys162, Cys183-Cys193, and Cys230-Cys244. 3 residues coordinate Cu cation: His124, His126, and His128. The segment at residues 152 to 187 (KASFCLEDTSCDYGYHRRFACTAHTQGLSPGCYDTY) is a cross-link (lysine tyrosylquinone (Lys-Tyr)). A 2',4',5'-topaquinone modification is found at Tyr187.

This sequence belongs to the lysyl oxidase family. Interacts with MFAP4. Interacts (via propeptide) with EFEMP2; this interaction is strong and facilitates formation of ternary complexes with ELN during elastic fiber assembly; this interaction limits interaction of EFEMP2 with FBLN5. Cu cation is required as a cofactor. It depends on lysine tyrosylquinone residue as a cofactor. In terms of processing, the lysine tyrosylquinone cross-link (LTQ) is generated by condensation of the epsilon-amino group of a lysine with a topaquinone produced by oxidation of tyrosine. Post-translationally, proteolytically cleaved by BMP1 which removes the propeptide. Also proteolytically cleaved by ADAMTS2 and ADAMTS14, but not by ADAMTS3, at an additional cleavage site downstream of the BMP1 cleavage site. The propeptide plays a role in directing the deposition of this enzyme to elastic fibers, via interaction with tropoelastin. Cleavage by BMP1 to remove the propeptide does not increase enzymatic activity but increases binding to collagen. Cleavage by ADAMTS2 produces a form with reduced collagen-binding activity. Sulfated at Tyr-19 and also at either Tyr-15 or Tyr-16 which enhances binding to collagen.

It is found in the secreted. Its subcellular location is the extracellular space. It catalyses the reaction L-lysyl-[protein] + O2 + H2O = (S)-2-amino-6-oxohexanoyl-[protein] + H2O2 + NH4(+). Its function is as follows. Responsible for the post-translational oxidative deamination of peptidyl lysine residues in precursors to fibrous collagen and elastin. Regulator of Ras expression. May play a role in tumor suppression. Plays a role in the aortic wall architecture. This is Protein-lysine 6-oxidase from Sus scrofa (Pig).